Reading from the N-terminus, the 376-residue chain is N-acetyldiaminopimelate deacetylase (376 aa).

Residue D70 is part of the active site. E129 functions as the Proton acceptor in the catalytic mechanism.

The protein belongs to the peptidase M20A family. N-acetyldiaminopimelate deacetylase subfamily.

It catalyses the reaction N-acetyl-(2S,6S)-2,6-diaminopimelate + H2O = (2S,6S)-2,6-diaminopimelate + acetate. Its pathway is amino-acid biosynthesis; L-lysine biosynthesis via DAP pathway; LL-2,6-diaminopimelate from (S)-tetrahydrodipicolinate (acetylase route): step 3/3. Functionally, catalyzes the conversion of N-acetyl-diaminopimelate to diaminopimelate and acetate. The chain is N-acetyldiaminopimelate deacetylase from Geobacillus sp. (strain WCH70).